The following is a 77-amino-acid chain: Secapin-2 (77 aa).

The signal sequence occupies residues 1-32; that stretch reads MKNYSKNATYLITVLLFSFVTMLLIIPSKCEA. Residues 33–52 constitute a propeptide that is removed on maturation; that stretch reads VSNDMQPLEARTADLVQQPR. A disulfide bond links C61 and C72. The residue at position 77 (P77) is a Proline amide.

This sequence belongs to the secapin family. As to expression, expressed by the venom gland.

The protein localises to the secreted. Its function is as follows. Serine protease inhibitor which exhibits antifibrinolytic, antielastolytic and antimicrobial activities. Displays antimicrobial activity against bacteria and fungi. Likely functions in the innate immune response to microbial infection and possibly in the venom, as an antifibrinolytic agent. Induces hyperalgesia and edema mediated by leukotrienes when injected into mice. Does not induce hemolytic activity, mast cell degranulation, or chemotactic activity for polymorphonucleated leukocytes (PMNL). The protein is Secapin-2 of Apis mellifera (Honeybee).